A 184-amino-acid polypeptide reads, in one-letter code: Photosystem I assembly protein Ycf4 (184 aa).

2 helical membrane-spanning segments follow: residues phenylalanine 22–serine 42 and isoleucine 57–serine 77.

It belongs to the Ycf4 family.

The protein localises to the plastid. It is found in the chloroplast thylakoid membrane. In terms of biological role, seems to be required for the assembly of the photosystem I complex. This is Photosystem I assembly protein Ycf4 from Liriodendron tulipifera (Tuliptree).